Here is a 480-residue protein sequence, read N- to C-terminus: Trigger factor (480 aa).

The region spanning 169 to 264 is the PPIase FKBP-type domain; the sequence is GDIAVVDFKG…LKELKEKELP (96 aa). The tract at residues 441-480 is disordered; that stretch reads PEGSLSPAEETEAAESDADADVSQTEQENSEPSTTEVTEG. Over residues 449-460 the composition is skewed to acidic residues; it reads EETEAAESDADA. Positions 462–480 are enriched in polar residues; that stretch reads VSQTEQENSEPSTTEVTEG.

It belongs to the FKBP-type PPIase family. Tig subfamily.

Its subcellular location is the cytoplasm. It carries out the reaction [protein]-peptidylproline (omega=180) = [protein]-peptidylproline (omega=0). Its function is as follows. Involved in protein export. Acts as a chaperone by maintaining the newly synthesized protein in an open conformation. Functions as a peptidyl-prolyl cis-trans isomerase. The protein is Trigger factor of Nostoc punctiforme (strain ATCC 29133 / PCC 73102).